Reading from the N-terminus, the 901-residue chain is Quinate repressor protein (901 aa).

Positions 1-88 (MSILVRPPKR…DSLQTRRKFP (88 aa)) are sufficient for repression. Disordered regions lie at residues 26–59 (LRDF…DGSR) and 878–901 (EEQG…GQPM). Over residues 31 to 43 (QGNSASTPINTSA) the composition is skewed to polar residues.

This sequence in the N-terminal section; belongs to the shikimate kinase family. It in the 2nd section; belongs to the type-I 3-dehydroquinase family. The protein in the C-terminal section; belongs to the shikimate dehydrogenase family. In terms of assembly, interacts with qutA; transcriptional activator of the quinate utilization pathway genes.

Its function is as follows. Multi-domain repressor protein that negatively regulates transcription of the quinate utilization pathway genes. May mediate its repressor activity by binding directly to the qutA activator protein. The protein is Quinate repressor protein (qutR) of Emericella nidulans (strain FGSC A4 / ATCC 38163 / CBS 112.46 / NRRL 194 / M139) (Aspergillus nidulans).